Consider the following 30-residue polypeptide: Root cyclotide 1 (30 aa).

The segment at residues 1 to 30 (GIPCAESCVWIPCTVTALLGCSCSNKVCYN) is a cross-link (cyclopeptide (Gly-Asn)). 3 cysteine pairs are disulfide-bonded: Cys4-Cys21, Cys8-Cys23, and Cys13-Cys28.

This is a cyclic peptide. As to expression, expressed in roots.

Probably participates in a plant defense mechanism. This Viola hederacea (Australian violet) protein is Root cyclotide 1.